The following is a 540-amino-acid chain: Glucose-6-phosphate isomerase (540 aa).

The Proton donor role is filled by glutamate 350. Catalysis depends on residues histidine 381 and lysine 503.

It belongs to the GPI family.

It localises to the cytoplasm. It carries out the reaction alpha-D-glucose 6-phosphate = beta-D-fructose 6-phosphate. It functions in the pathway carbohydrate biosynthesis; gluconeogenesis. The protein operates within carbohydrate degradation; glycolysis; D-glyceraldehyde 3-phosphate and glycerone phosphate from D-glucose: step 2/4. Catalyzes the reversible isomerization of glucose-6-phosphate to fructose-6-phosphate. This is Glucose-6-phosphate isomerase from Paraburkholderia phytofirmans (strain DSM 17436 / LMG 22146 / PsJN) (Burkholderia phytofirmans).